A 178-amino-acid chain; its full sequence is Fatty-acid and retinol-binding protein 1 (178 aa).

The N-terminal stretch at 1–16 (MYHQLILMALIGVIMA) is a signal peptide. N-linked (GlcNAc...) asparagine glycans are attached at residues asparagine 44 and asparagine 75. 2 coiled-coil regions span residues 67-89 (DAAL…ELRN) and 123-154 (KLDM…LKAT). N-linked (GlcNAc...) asparagine glycosylation occurs at asparagine 157.

This sequence belongs to the fatty-acid and retinol-binding protein (FARBP) family. In terms of processing, N-glycosylated.

It localises to the secreted. Binds retinol and different fatty acids. The chain is Fatty-acid and retinol-binding protein 1 from Onchocerca gutturosa.